The chain runs to 887 residues: Degenerin-like protein unc-105 (887 aa).

A disordered region spans residues 1 to 33; that stretch reads MAEDRIKSKLRRPASIESTMSSRTKPRHKPSPM. The Cytoplasmic segment spans residues 1 to 93; it reads MAEDRIKSKL…AATADGKWRW (93 aa). Residues 94-114 form a helical membrane-spanning segment; the sequence is FWYTAFTICLLALLIQIFFLI. At 115–698 the chain is on the extracellular side; the sequence is SKYRQYGKTV…SVLADLGGLT (584 aa). Residues N244, N450, N473, N581, and N599 are each glycosylated (N-linked (GlcNAc...) asparagine). Residues 699–719 traverse the membrane as a helical segment; the sequence is GLWIGASVVSLLEIVTLIVFA. The Cytoplasmic portion of the chain corresponds to 720–887; sequence TQAYVRKRKG…YSAPYEHRKK (168 aa). Disordered regions lie at residues 794–815 and 859–887; these read AIQE…NGSC and SNSE…HRKK.

The protein belongs to the amiloride-sensitive sodium channel (TC 1.A.6) family. Expressed in body wall muscle.

The protein resides in the membrane. Functionally, ion channel which is permeable to small monovalent cations. Shown not to be H+-ion gated. May be mechanosensitive and is required for growth and muscle development. The protein is Degenerin-like protein unc-105 (unc-105) of Caenorhabditis elegans.